Here is a 307-residue protein sequence, read N- to C-terminus: 1-aminocyclopropane-1-carboxylate oxidase 5 (307 aa).

A coiled-coil region spans residues 106–134; it reads SNIKETMGEYREEVRKLASKMMEVMDENL. Residues 152 to 256 form the Fe2OG dioxygenase domain; that stretch reads GEETAFFGTK…RRSIASFYNP (105 aa). Residues His180, Asp182, and His237 each coordinate Fe cation. Arg247 serves as a coordination point for 2-oxoglutarate.

The protein belongs to the iron/ascorbate-dependent oxidoreductase family. The cofactor is Fe(2+).

The enzyme catalyses 1-aminocyclopropane-1-carboxylate + L-ascorbate + O2 = ethene + L-dehydroascorbate + hydrogen cyanide + CO2 + 2 H2O. Its pathway is alkene biosynthesis; ethylene biosynthesis via S-adenosyl-L-methionine; ethylene from S-adenosyl-L-methionine: step 2/2. Functionally, enzyme involved in the ethylene biosynthesis. This is 1-aminocyclopropane-1-carboxylate oxidase 5 from Arabidopsis thaliana (Mouse-ear cress).